The sequence spans 354 residues: Rhodopsin (354 aa).

Residues 1 to 36 (MNGTEGPYFNVPMVNTTGIVRSPYEYPQYYLVSPAA) lie on the Extracellular side of the membrane. Residues Asn-2 and Asn-15 are each glycosylated (N-linked (GlcNAc...) asparagine). Residues 37 to 61 (YAALGAYMFFLILVGFPINFLTLYV) form a helical membrane-spanning segment. At 62-73 (TLEHKKLRTPLN) the chain is on the cytoplasmic side. Residues 74-96 (YILLNLAVADLFMVFGGFTTTMY) traverse the membrane as a helical segment. Topologically, residues 97-110 (TSMHGYFVLGRLGC) are extracellular. Cys-110 and Cys-187 are joined by a disulfide. A helical membrane pass occupies residues 111–133 (NLEGFFATLGGEIGLWSLVVLAI). Positions 134–136 (ERW) match the 'Ionic lock' involved in activated form stabilization motif. Residues 134-152 (ERWVVVCKPISNFRFGENH) are Cytoplasmic-facing. A helical transmembrane segment spans residues 153–173 (AIMGLVFTWIMAASCAVPPLV). The Extracellular portion of the chain corresponds to 174–202 (GWSRYIPEGMQCSCGVDYYTRAEGFNNES). A helical transmembrane segment spans residues 203 to 224 (FVVYMFVCHFLIPLIVVFFCYG). Over 225–252 (RLLCAVKEAAAAQQESETTQRAEREVTR) the chain is Cytoplasmic. The helical transmembrane segment at 253–274 (MVVIMVIGFLVCWLPYASVAWY) threads the bilayer. Topologically, residues 275-286 (IFTNQGSEFGPL) are extracellular. A helical transmembrane segment spans residues 287 to 308 (FMTIPAFFAKSSSIYNPAIYIC). An N6-(retinylidene)lysine modification is found at Lys-296. Over 309–354 (MNKQFRNCMITTLCCGKNPFEEEEGASTTASKTEASSVSSSSVSPA) the chain is Cytoplasmic. 2 S-palmitoyl cysteine lipidation sites follow: Cys-322 and Cys-323. Positions 332–354 (EGASTTASKTEASSVSSSSVSPA) are disordered. A compositionally biased stretch (low complexity) spans 334–354 (ASTTASKTEASSVSSSSVSPA).

The protein belongs to the G-protein coupled receptor 1 family. Opsin subfamily. Post-translationally, phosphorylated on some or all of the serine and threonine residues present in the C-terminal region. In terms of processing, contains one covalently linked retinal chromophore.

It is found in the membrane. Its subcellular location is the cell projection. The protein localises to the cilium. It localises to the photoreceptor outer segment. Functionally, photoreceptor required for image-forming vision at low light intensity. While most salt water fish species use retinal as chromophore, most freshwater fish use 3-dehydroretinal, or a mixture of retinal and 3-dehydroretinal. Light-induced isomerization of 11-cis to all-trans retinal triggers a conformational change that activates signaling via G-proteins. Subsequent receptor phosphorylation mediates displacement of the bound G-protein alpha subunit by arrestin and terminates signaling. In Oryzias latipes (Japanese rice fish), this protein is Rhodopsin (rho).